A 649-amino-acid polypeptide reads, in one-letter code: Threonine--tRNA ligase (649 aa).

A TGS domain is found at 1-61; that stretch reads MIKITFPDGA…TQDGSIEIVT (61 aa). A catalytic region spans residues 242–540; the sequence is DHRKLGKELD…LIETYKGAFP (299 aa). Positions 336, 387, and 517 each coordinate Zn(2+).

The protein belongs to the class-II aminoacyl-tRNA synthetase family. In terms of assembly, homodimer. Zn(2+) is required as a cofactor.

It is found in the cytoplasm. It catalyses the reaction tRNA(Thr) + L-threonine + ATP = L-threonyl-tRNA(Thr) + AMP + diphosphate + H(+). In terms of biological role, catalyzes the attachment of threonine to tRNA(Thr) in a two-step reaction: L-threonine is first activated by ATP to form Thr-AMP and then transferred to the acceptor end of tRNA(Thr). Also edits incorrectly charged L-seryl-tRNA(Thr). The chain is Threonine--tRNA ligase from Streptococcus mutans serotype c (strain ATCC 700610 / UA159).